The primary structure comprises 197 residues: Dephospho-CoA kinase (197 aa).

The DPCK domain maps to 2-197 (IIGLTGGIAS…GAIKDLANLV (196 aa)). 10 to 15 (ASGKST) provides a ligand contact to ATP.

The protein belongs to the CoaE family.

The protein resides in the cytoplasm. The catalysed reaction is 3'-dephospho-CoA + ATP = ADP + CoA + H(+). It participates in cofactor biosynthesis; coenzyme A biosynthesis; CoA from (R)-pantothenate: step 5/5. Functionally, catalyzes the phosphorylation of the 3'-hydroxyl group of dephosphocoenzyme A to form coenzyme A. This is Dephospho-CoA kinase from Streptococcus thermophilus (strain CNRZ 1066).